The chain runs to 292 residues: Oxidative stress-responsive serine-rich protein 1 (292 aa).

The disordered stretch occupies residues 24 to 178 (ASGSVASLSV…ATQVPQASLK (155 aa)). Basic residues predominate over residues 65–83 (STRKSSRGAVRTQRRRRSK). A phosphothreonine mark is found at T143 and T233.

The sequence is that of Oxidative stress-responsive serine-rich protein 1 (OSER1) from Homo sapiens (Human).